The primary structure comprises 370 residues: MFRSALKQIVTYEAGKPIELVVREYGIKPEDIIKLGSNENPYGTSAQVVESLQKNAHKAFLYPDDSMYELKNALASHFDVESKHIIIGAGSDQIIEFCMQALNHHNAQVLMAKTTFAMYEVYAKLAGVEISKTPSDEHILEEFFQLYQSEKERKHISAVFLCAPNNPLGECLDAAAIEQFIQAVDKDTLVIVDGAYQEFAAYKDKAKAINPKQLIERFSNVIYLGTFSKVYGLGGMRVGYGIASEHIISMLYKVRPPFNVTTLSLQAALIALKDQVFVSECIKNNAIEMARYEAFANEMGFTFIPSYGNFITFLHSHIESSHLCDWLLQNGLIVRNLRSYGLNAFRITIGRAEQNTRVFELIKAYLQIHN.

Position 229 is an N6-(pyridoxal phosphate)lysine (Lys229).

Belongs to the class-II pyridoxal-phosphate-dependent aminotransferase family. Histidinol-phosphate aminotransferase subfamily. As to quaternary structure, homodimer. Pyridoxal 5'-phosphate serves as cofactor.

The catalysed reaction is L-histidinol phosphate + 2-oxoglutarate = 3-(imidazol-4-yl)-2-oxopropyl phosphate + L-glutamate. It functions in the pathway amino-acid biosynthesis; L-histidine biosynthesis; L-histidine from 5-phospho-alpha-D-ribose 1-diphosphate: step 7/9. This Helicobacter hepaticus (strain ATCC 51449 / 3B1) protein is Histidinol-phosphate aminotransferase.